A 185-amino-acid chain; its full sequence is Adenine phosphoribosyltransferase (185 aa).

This sequence belongs to the purine/pyrimidine phosphoribosyltransferase family. As to quaternary structure, homodimer.

The protein localises to the cytoplasm. It carries out the reaction AMP + diphosphate = 5-phospho-alpha-D-ribose 1-diphosphate + adenine. It participates in purine metabolism; AMP biosynthesis via salvage pathway; AMP from adenine: step 1/1. In terms of biological role, catalyzes a salvage reaction resulting in the formation of AMP, that is energically less costly than de novo synthesis. This is Adenine phosphoribosyltransferase from Pectobacterium carotovorum subsp. carotovorum (strain PC1).